Consider the following 265-residue polypeptide: Adenosine 5'-phosphosulfate reductase (265 aa).

Residues C135, C136, C218, and C221 each contribute to the [4Fe-4S] cluster site. Catalysis depends on C246, which acts as the Nucleophile; cysteine thiosulfonate intermediate.

This sequence belongs to the PAPS reductase family. CysH subfamily. The cofactor is [4Fe-4S] cluster.

The protein resides in the cytoplasm. It carries out the reaction [thioredoxin]-disulfide + sulfite + AMP + 2 H(+) = adenosine 5'-phosphosulfate + [thioredoxin]-dithiol. The protein operates within sulfur metabolism; hydrogen sulfide biosynthesis; sulfite from sulfate. Its function is as follows. Catalyzes the formation of sulfite from adenosine 5'-phosphosulfate (APS) using thioredoxin as an electron donor. This chain is Adenosine 5'-phosphosulfate reductase, found in Rhizobium meliloti (strain 1021) (Ensifer meliloti).